A 335-amino-acid polypeptide reads, in one-letter code: uncharacterized protein (335 aa).

This is an uncharacterized protein from Methanocaldococcus jannaschii (strain ATCC 43067 / DSM 2661 / JAL-1 / JCM 10045 / NBRC 100440) (Methanococcus jannaschii).